Consider the following 171-residue polypeptide: Small ribosomal subunit protein mS25 (171 aa).

The protein belongs to the mitochondrion-specific ribosomal protein mS25 family. Component of the mitochondrial ribosome small subunit (28S) which comprises a 12S rRNA and about 30 distinct proteins.

Its subcellular location is the mitochondrion. This is Small ribosomal subunit protein mS25 (Mrps25) from Mus musculus (Mouse).